Here is a 154-residue protein sequence, read N- to C-terminus: Probable prefoldin subunit 5 (154 aa).

The protein belongs to the prefoldin subunit alpha family. Heterohexamer of two PFD-alpha type and four PFD-beta type subunits.

Its function is as follows. Binds specifically to cytosolic chaperonin (c-CPN) and transfers target proteins to it. Binds to nascent polypeptide chain and promotes folding in an environment in which there are many competing pathways for nonnative proteins. This chain is Probable prefoldin subunit 5, found in Caenorhabditis briggsae.